Here is a 664-residue protein sequence, read N- to C-terminus: Probable urea active transporter 1 (664 aa).

Helical transmembrane passes span 9–29 (SVGYGIVVGLGLGFAALMIFV), 56–76 (GLVASAVVSSWTWASTLLTSA), 86–106 (GAFWYASGACVQILLFTVLAI), 132–152 (GVFLVFAYITNILVMAMLLCG), 165–185 (TVAVCFLLPVGVIIYTMFGGI), 189–209 (FLTDYIHTVIILVILIMFSLA), 252–272 (GAIFFIINLAGNFGTVFVDNG), 290–310 (ILGGLAWFAIPWLAATTMGLV), 327–347 (MSDLEVSEGLVLPYAAIALMG), 353–373 (ATLLLVFMAVTSAASAELIAV), 395–415 (LLYTGHASLIVFGFAMSGFAT), 428–448 (YLLMGVLVCPAVVPATCVMLF), 454–474 (IAVTVSPVLGIISSIITWLVV), 496–516 (AGNVVGLLSPALYILILSIIF), 555–575 (VAALIITAAFIILWPWPMYGT), and 587–607 (WVVVGLIWIFFTVFAVGIFPL).

Belongs to the sodium:solute symporter (SSF) (TC 2.A.21) family.

Its subcellular location is the membrane. In terms of biological role, involved in active transport of urea. The sequence is that of Probable urea active transporter 1 (dur3-1) from Schizosaccharomyces pombe (strain 972 / ATCC 24843) (Fission yeast).